The following is a 738-amino-acid chain: Polyribonucleotide nucleotidyltransferase (738 aa).

Positions 487 and 493 each coordinate Mg(2+). One can recognise a KH domain in the interval 554–613 (PKIVTMTINPDKIRDVIGPGGKMINSIIDQTGVKIDIEQDGTVFIASTDQEGIDLAMSMI). An S1 motif domain is found at 623 to 691 (GEVYDATVRR…DKGRVNASRK (69 aa)). Residues 704–738 (EAYEAKRKAARESRPPRDSRPPRRDGDRRPPRSTN) are disordered.

This sequence belongs to the polyribonucleotide nucleotidyltransferase family. It depends on Mg(2+) as a cofactor.

It localises to the cytoplasm. It carries out the reaction RNA(n+1) + phosphate = RNA(n) + a ribonucleoside 5'-diphosphate. Involved in mRNA degradation. Catalyzes the phosphorolysis of single-stranded polyribonucleotides processively in the 3'- to 5'-direction. The polypeptide is Polyribonucleotide nucleotidyltransferase (Exiguobacterium sp. (strain ATCC BAA-1283 / AT1b)).